The chain runs to 262 residues: Thiazole synthase (262 aa).

The Schiff-base intermediate with DXP role is filled by Lys96. 1-deoxy-D-xylulose 5-phosphate is bound by residues Gly157, 184–185 (AG), and 206–207 (NT).

Belongs to the ThiG family. In terms of assembly, homotetramer. Forms heterodimers with either ThiH or ThiS.

Its subcellular location is the cytoplasm. The catalysed reaction is [ThiS sulfur-carrier protein]-C-terminal-Gly-aminoethanethioate + 2-iminoacetate + 1-deoxy-D-xylulose 5-phosphate = [ThiS sulfur-carrier protein]-C-terminal Gly-Gly + 2-[(2R,5Z)-2-carboxy-4-methylthiazol-5(2H)-ylidene]ethyl phosphate + 2 H2O + H(+). It participates in cofactor biosynthesis; thiamine diphosphate biosynthesis. In terms of biological role, catalyzes the rearrangement of 1-deoxy-D-xylulose 5-phosphate (DXP) to produce the thiazole phosphate moiety of thiamine. Sulfur is provided by the thiocarboxylate moiety of the carrier protein ThiS. In vitro, sulfur can be provided by H(2)S. In Legionella pneumophila (strain Corby), this protein is Thiazole synthase.